Consider the following 454-residue polypeptide: Serine--tRNA ligase (454 aa).

247-249 contacts L-serine; it reads TAE. ATP contacts are provided by residues 278-280 and Val294; that span reads RKE. L-serine is bound at residue Glu301. 365 to 368 is a binding site for ATP; it reads ELAS. Residue Thr400 participates in L-serine binding.

Belongs to the class-II aminoacyl-tRNA synthetase family. Type-1 seryl-tRNA synthetase subfamily. As to quaternary structure, homodimer. The tRNA molecule binds across the dimer.

It is found in the cytoplasm. It carries out the reaction tRNA(Ser) + L-serine + ATP = L-seryl-tRNA(Ser) + AMP + diphosphate + H(+). The enzyme catalyses tRNA(Sec) + L-serine + ATP = L-seryl-tRNA(Sec) + AMP + diphosphate + H(+). It participates in aminoacyl-tRNA biosynthesis; selenocysteinyl-tRNA(Sec) biosynthesis; L-seryl-tRNA(Sec) from L-serine and tRNA(Sec): step 1/1. Its function is as follows. Catalyzes the attachment of serine to tRNA(Ser). Is also able to aminoacylate tRNA(Sec) with serine, to form the misacylated tRNA L-seryl-tRNA(Sec), which will be further converted into selenocysteinyl-tRNA(Sec). This chain is Serine--tRNA ligase, found in Pyrobaculum calidifontis (strain DSM 21063 / JCM 11548 / VA1).